We begin with the raw amino-acid sequence, 375 residues long: Succinyl-diaminopimelate desuccinylase (375 aa).

H66 lines the Zn(2+) pocket. Residue D68 is part of the active site. Residue D99 participates in Zn(2+) binding. E133 serves as the catalytic Proton acceptor. Zn(2+) is bound by residues E134, E162, and H348.

It belongs to the peptidase M20A family. DapE subfamily. As to quaternary structure, homodimer. Requires Zn(2+) as cofactor. It depends on Co(2+) as a cofactor.

The enzyme catalyses N-succinyl-(2S,6S)-2,6-diaminopimelate + H2O = (2S,6S)-2,6-diaminopimelate + succinate. Its pathway is amino-acid biosynthesis; L-lysine biosynthesis via DAP pathway; LL-2,6-diaminopimelate from (S)-tetrahydrodipicolinate (succinylase route): step 3/3. Catalyzes the hydrolysis of N-succinyl-L,L-diaminopimelic acid (SDAP), forming succinate and LL-2,6-diaminopimelate (DAP), an intermediate involved in the bacterial biosynthesis of lysine and meso-diaminopimelic acid, an essential component of bacterial cell walls. This is Succinyl-diaminopimelate desuccinylase from Klebsiella pneumoniae (strain 342).